A 352-amino-acid chain; its full sequence is Staphylococcal superantigen-like 3 (352 aa).

Positions 1–30 (MKMRTIAKTSLALGLLTTGAITVTTQSVKA) are cleaved as a signal peptide. Residues 61 to 165 (ATTQAANTRQ…TIKQAQTDMT (105 aa)) are disordered. Over residues 69–104 (RQERTPKLEKAPNTNEEKTSASKIEKISQPKQEEQK) the composition is skewed to basic and acidic residues. Positions 114 to 141 (PKQEQSQTTTESTTPKTKVTTPPSTNTP) are enriched in low complexity. Polar residues predominate over residues 142 to 164 (QPMQSTKSDTPQSPTIKQAQTDM). Residues 228-326 (IDVFIVLEDN…VIKMKNGGKY (99 aa)) are sialyl Lewis X-binding.

It belongs to the staphylococcal/streptococcal toxin family. As to quaternary structure, interacts with host TLR2 (via its extracellular domain).

It localises to the secreted. In terms of biological role, secreted protein that plays an essential role in immune innate response inhibition by interacting with and inhibiting host TLR2. In turn, bacteria recognition by immune cells is impaired and cytokine production is inhibited. Mechanistically, by interacting with TLR2, blocks ligand binding and thus inhibits activation. Second, by interacting with an already formed TLR2-lipopeptide complex, prevents TLR heterodimerization and downstream signaling. The interaction with host TLR2 does not involve sialyl Lewis X interactions. The sequence is that of Staphylococcal superantigen-like 3 from Staphylococcus aureus (strain Newman).